The following is a 324-amino-acid chain: Elongation factor P--(R)-beta-lysine ligase (324 aa).

Residue 75–77 (SPE) coordinates substrate. ATP-binding positions include 99 to 101 (RNE) and Asn108. Residue Tyr117 coordinates substrate. 243–244 (EL) lines the ATP pocket. Glu250 is a substrate binding site. Gly299 is an ATP binding site.

It belongs to the class-II aminoacyl-tRNA synthetase family. EpmA subfamily. Homodimer.

The catalysed reaction is D-beta-lysine + L-lysyl-[protein] + ATP = N(6)-((3R)-3,6-diaminohexanoyl)-L-lysyl-[protein] + AMP + diphosphate + H(+). Its function is as follows. With EpmB is involved in the beta-lysylation step of the post-translational modification of translation elongation factor P (EF-P). Catalyzes the ATP-dependent activation of (R)-beta-lysine produced by EpmB, forming a lysyl-adenylate, from which the beta-lysyl moiety is then transferred to the epsilon-amino group of a conserved specific lysine residue in EF-P. The polypeptide is Elongation factor P--(R)-beta-lysine ligase (Vibrio cholerae serotype O1 (strain ATCC 39315 / El Tor Inaba N16961)).